The primary structure comprises 92 residues: uncharacterized protein (92 aa).

Transmembrane regions (helical) follow at residues 34-54 and 65-85; these read GLGI…FMFG and LLYI…ASTV.

Its subcellular location is the cell membrane. This is an uncharacterized protein from Bacillus anthracis.